A 328-amino-acid chain; its full sequence is tRNA U34 carboxymethyltransferase (328 aa).

Residues lysine 91, tryptophan 105, lysine 110, glycine 130, 152–154 (DPS), methionine 196, tyrosine 200, and arginine 315 each bind carboxy-S-adenosyl-L-methionine.

The protein belongs to the class I-like SAM-binding methyltransferase superfamily. CmoB family. Homotetramer.

The enzyme catalyses carboxy-S-adenosyl-L-methionine + 5-hydroxyuridine(34) in tRNA = 5-carboxymethoxyuridine(34) in tRNA + S-adenosyl-L-homocysteine + H(+). In terms of biological role, catalyzes carboxymethyl transfer from carboxy-S-adenosyl-L-methionine (Cx-SAM) to 5-hydroxyuridine (ho5U) to form 5-carboxymethoxyuridine (cmo5U) at position 34 in tRNAs. The protein is tRNA U34 carboxymethyltransferase of Psychromonas ingrahamii (strain DSM 17664 / CCUG 51855 / 37).